The following is a 397-amino-acid chain: Endoglucanase (397 aa).

The active-site Proton donor is the glutamate 194. Glutamate 317 acts as the Nucleophile in catalysis.

This sequence belongs to the glycosyl hydrolase 5 (cellulase A) family.

It catalyses the reaction Endohydrolysis of (1-&gt;4)-beta-D-glucosidic linkages in cellulose, lichenin and cereal beta-D-glucans.. The sequence is that of Endoglucanase from Paenibacillus polymyxa (Bacillus polymyxa).